Consider the following 133-residue polypeptide: ATP synthase epsilon chain, chloroplastic (133 aa).

Belongs to the ATPase epsilon chain family. As to quaternary structure, F-type ATPases have 2 components, CF(1) - the catalytic core - and CF(0) - the membrane proton channel. CF(1) has five subunits: alpha(3), beta(3), gamma(1), delta(1), epsilon(1). CF(0) has three main subunits: a, b and c.

It is found in the plastid. Its subcellular location is the chloroplast thylakoid membrane. In terms of biological role, produces ATP from ADP in the presence of a proton gradient across the membrane. The sequence is that of ATP synthase epsilon chain, chloroplastic from Vitis vinifera (Grape).